The primary structure comprises 181 residues: MSWGLQILPCLSLILLLWNQVPGLEGQEFRSGSCQVTGVVLPELWEAFWTVKNTVQTQDDITSIRLLKPQVLRNVSGAESCYLAHSLLKFYLNTVFKNYHSKIAKFKVLRSFSTLANNFIVIMSQLQPSKDNSMLPISESAHQRFLLFRRAFKQLDTEVALVKAFGEVDILLTWMQKFYHL.

Positions Met1–Gly26 are cleaved as a signal peptide. An intrachain disulfide couples Cys34 to Cys81. The N-linked (GlcNAc...) asparagine glycan is linked to Asn74. Residue Lys97 forms a Glycyl lysine isopeptide (Lys-Gly) (interchain with G-Cter in ubiquitin) linkage.

This sequence belongs to the IL-10 family. In terms of processing, glycosylated. Post-translationally, ubiquitination at Lys-97 promotes proteasomal degradation. Selectively expressed by Th2 cells. Expressed in the liver.

The protein localises to the secreted. In terms of biological role, multifunctional cytokine mainly produced by T-cells that plays a regulatory role in immune response, tissue homeostasis, host defense, and oncogenesis. Possesses antiviral functions and induces the type I interferon response during influenza infection. Signals through two receptor complexes IL20RA/IL20RB or IL20RB/IL22RA1. In turn, stimulates the JAK1-STAT3 and MAPK pathways and promotes the secretion of pro-inflammatory mediators including IL8 and MMP1. Intracellularly, maintains endoplasmic reticulum homeostasis by restricting the eIF2alpha-CHOP pathway-mediated stress signal. In addition, acts as a quality control mechanism for the ubiquitin proteasome system by alerting the cell to proteasome dysfunction through activation of PKR/EIF2AK2. This is Interleukin-24 (Il24) from Mus musculus (Mouse).